Consider the following 333-residue polypeptide: Ribosomal RNA large subunit methyltransferase F (333 aa).

Basic residues predominate over residues 1-10 (MPQPPKRPRK). The disordered stretch occupies residues 1 to 31 (MPQPPKRPRKPAPAAVKTAPAKGELHPRNRH). The segment covering 12–22 (APAAVKTAPAK) has biased composition (low complexity).

It belongs to the methyltransferase superfamily. METTL16/RlmF family.

The protein localises to the cytoplasm. It catalyses the reaction adenosine(1618) in 23S rRNA + S-adenosyl-L-methionine = N(6)-methyladenosine(1618) in 23S rRNA + S-adenosyl-L-homocysteine + H(+). Functionally, specifically methylates the adenine in position 1618 of 23S rRNA. In Ectopseudomonas mendocina (strain ymp) (Pseudomonas mendocina), this protein is Ribosomal RNA large subunit methyltransferase F.